The primary structure comprises 108 residues: Large ribosomal subunit protein uL24 (108 aa).

It belongs to the universal ribosomal protein uL24 family. In terms of assembly, part of the 50S ribosomal subunit.

Functionally, one of two assembly initiator proteins, it binds directly to the 5'-end of the 23S rRNA, where it nucleates assembly of the 50S subunit. One of the proteins that surrounds the polypeptide exit tunnel on the outside of the subunit. This chain is Large ribosomal subunit protein uL24, found in Mycoplasma mycoides subsp. mycoides SC (strain CCUG 32753 / NCTC 10114 / PG1).